The chain runs to 246 residues: Large ribosomal subunit protein uL3 (246 aa).

Disordered regions lie at residues S140–M162 and D215–A246. The residue at position 151 (Q151) is an N5-methylglutamine. Over residues E234–A246 the composition is skewed to low complexity.

The protein belongs to the universal ribosomal protein uL3 family. In terms of assembly, part of the 50S ribosomal subunit. Forms a cluster with proteins L14 and L19. In terms of processing, methylated by PrmB.

Functionally, one of the primary rRNA binding proteins, it binds directly near the 3'-end of the 23S rRNA, where it nucleates assembly of the 50S subunit. The polypeptide is Large ribosomal subunit protein uL3 (Methylorubrum extorquens (strain PA1) (Methylobacterium extorquens)).